Reading from the N-terminus, the 132-residue chain is Large ribosomal subunit protein bL17 (132 aa).

This sequence belongs to the bacterial ribosomal protein bL17 family. In terms of assembly, part of the 50S ribosomal subunit. Contacts protein L32.

The sequence is that of Large ribosomal subunit protein bL17 from Marinobacter nauticus (strain ATCC 700491 / DSM 11845 / VT8) (Marinobacter aquaeolei).